The primary structure comprises 177 residues: ATP synthase subunit delta, chloroplastic (177 aa).

Belongs to the ATPase delta chain family. As to quaternary structure, F-type ATPases have 2 components, F(1) - the catalytic core - and F(0) - the membrane proton channel. F(1) has five subunits: alpha(3), beta(3), gamma(1), delta(1), epsilon(1). CF(0) has four main subunits: a(1), b(1), b'(1) and c(10-14). The alpha and beta chains form an alternating ring which encloses part of the gamma chain. F(1) is attached to F(0) by a central stalk formed by the gamma and epsilon chains, while a peripheral stalk is formed by the delta, b and b' chains.

It localises to the plastid. The protein localises to the chloroplast thylakoid membrane. Functionally, f(1)F(0) ATP synthase produces ATP from ADP in the presence of a proton or sodium gradient. F-type ATPases consist of two structural domains, F(1) containing the extramembraneous catalytic core and F(0) containing the membrane proton channel, linked together by a central stalk and a peripheral stalk. During catalysis, ATP synthesis in the catalytic domain of F(1) is coupled via a rotary mechanism of the central stalk subunits to proton translocation. Its function is as follows. This protein is part of the stalk that links CF(0) to CF(1). It either transmits conformational changes from CF(0) to CF(1) or is implicated in proton conduction. In Galdieria sulphuraria (Red alga), this protein is ATP synthase subunit delta, chloroplastic.